Consider the following 208-residue polypeptide: Uracil phosphoribosyltransferase (208 aa).

5-phospho-alpha-D-ribose 1-diphosphate-binding positions include R78, R103, and 130–138 (DPMLATGGT). Residues I193 and 198–200 (GDA) each bind uracil. D199 contacts 5-phospho-alpha-D-ribose 1-diphosphate.

This sequence belongs to the UPRTase family. Requires Mg(2+) as cofactor.

The enzyme catalyses UMP + diphosphate = 5-phospho-alpha-D-ribose 1-diphosphate + uracil. The protein operates within pyrimidine metabolism; UMP biosynthesis via salvage pathway; UMP from uracil: step 1/1. Allosterically activated by GTP. In terms of biological role, catalyzes the conversion of uracil and 5-phospho-alpha-D-ribose 1-diphosphate (PRPP) to UMP and diphosphate. In Maridesulfovibrio salexigens (strain ATCC 14822 / DSM 2638 / NCIMB 8403 / VKM B-1763) (Desulfovibrio salexigens), this protein is Uracil phosphoribosyltransferase.